The sequence spans 902 residues: Translation initiation factor IF-2 (902 aa).

Basic and acidic residues-rich tracts occupy residues 1-12 (MVDTKTPGDKKL) and 43-60 (VVEKRGKRRIGDGPEPHA). Positions 1–276 (MVDTKTPGDK…KPGPQKERGR (276 aa)) are disordered. Positions 69 to 84 (PAAPAPSRPAPPPAPP) are enriched in pro residues. Residues 111-174 (AKLREVEERR…ETEAKKRFGE (64 aa)) show a composition bias toward basic and acidic residues. 2 stretches are compositionally biased toward low complexity: residues 181-190 (AARPATAAPA) and 198-237 (APAARPGTTTTRPGTTTARPATTTAQRPGAPAGRGPAVAA). The tr-type G domain maps to 398 to 567 (TRSPVVTVMG…MIALQADILD (170 aa)). Residues 407–414 (GHVDHGKT) form a G1 region. 407-414 (GHVDHGKT) is a GTP binding site. The segment at 432 to 436 (GITQH) is G2. A G3 region spans residues 455–458 (DTPG). GTP contacts are provided by residues 455–459 (DTPGH) and 509–512 (NKID). Residues 509–512 (NKID) form a G4 region. Residues 545-547 (SAK) are G5.

Belongs to the TRAFAC class translation factor GTPase superfamily. Classic translation factor GTPase family. IF-2 subfamily.

Its subcellular location is the cytoplasm. Its function is as follows. One of the essential components for the initiation of protein synthesis. Protects formylmethionyl-tRNA from spontaneous hydrolysis and promotes its binding to the 30S ribosomal subunits. Also involved in the hydrolysis of GTP during the formation of the 70S ribosomal complex. The polypeptide is Translation initiation factor IF-2 (Bradyrhizobium diazoefficiens (strain JCM 10833 / BCRC 13528 / IAM 13628 / NBRC 14792 / USDA 110)).